The chain runs to 76 residues: DNA-directed RNA polymerase subunit epsilon (76 aa).

This sequence belongs to the RNA polymerase subunit epsilon family. RNAP is composed of a core of 2 alpha, a beta and a beta' subunit. The core is associated with a delta subunit, and at least one of epsilon or omega. When a sigma factor is associated with the core the holoenzyme is formed, which can initiate transcription.

The enzyme catalyses RNA(n) + a ribonucleoside 5'-triphosphate = RNA(n+1) + diphosphate. In terms of biological role, a non-essential component of RNA polymerase (RNAP). This chain is DNA-directed RNA polymerase subunit epsilon, found in Streptococcus equi subsp. zooepidemicus (strain H70).